The sequence spans 138 residues: Large ribosomal subunit protein uL16 (138 aa).

Positions 1 to 17 (MLIPRKVKHRKQHHPRQ) are enriched in basic residues. The interval 1-24 (MLIPRKVKHRKQHHPRQRGIASGG) is disordered.

It belongs to the universal ribosomal protein uL16 family. As to quaternary structure, part of the 50S ribosomal subunit.

Binds 23S rRNA and is also seen to make contacts with the A and possibly P site tRNAs. In Mycobacterium ulcerans (strain Agy99), this protein is Large ribosomal subunit protein uL16.